The chain runs to 199 residues: GTP cyclohydrolase 1 (199 aa).

The Zn(2+) site is built by cysteine 89, histidine 92, and cysteine 161.

Belongs to the GTP cyclohydrolase I family. In terms of assembly, homomer.

The catalysed reaction is GTP + H2O = 7,8-dihydroneopterin 3'-triphosphate + formate + H(+). It functions in the pathway cofactor biosynthesis; 7,8-dihydroneopterin triphosphate biosynthesis; 7,8-dihydroneopterin triphosphate from GTP: step 1/1. The chain is GTP cyclohydrolase 1 from Bifidobacterium longum (strain DJO10A).